The following is a 219-amino-acid chain: MGRRPARCYRQIKNKPYPKSRFCRGVPDPKIRIYDVGMKRKGVDEFPFCVHLVSWEKENVSSEALEAARIACNKYMTKSAGKDAFHLRVRVHPFHVLRINKMLSCAGADRLQTGMRGAFGKPQGVCARVAIGQVLLSVRCKDGNSNHAQEALRRAKFKFPGRQKIIVSRKWGFTKFSRTDYLKYKSENRIVPDGVNAKLLGNHGPLAARQPGRAFLSSS.

The protein belongs to the universal ribosomal protein uL16 family. As to quaternary structure, component of the small ribosomal subunit. Mature ribosomes consist of a small (40S) and a large (60S) subunit. The 40S subunit contains about 33 different proteins and 1 molecule of RNA (18S). The 60S subunit contains about 49 different proteins and 3 molecules of RNA (25S, 5.8S and 5S).

The chain is Large ribosomal subunit protein uL16 (RPL10) from Solanum melongena (Eggplant).